Consider the following 734-residue polypeptide: Ribosomal RNA large subunit methyltransferase K/L (734 aa).

A THUMP domain is found at 49–167; sequence HAYRICMWSR…KTEHTYCLDL (119 aa).

This sequence belongs to the methyltransferase superfamily. RlmKL family.

The protein resides in the cytoplasm. It carries out the reaction guanosine(2445) in 23S rRNA + S-adenosyl-L-methionine = N(2)-methylguanosine(2445) in 23S rRNA + S-adenosyl-L-homocysteine + H(+). The enzyme catalyses guanosine(2069) in 23S rRNA + S-adenosyl-L-methionine = N(2)-methylguanosine(2069) in 23S rRNA + S-adenosyl-L-homocysteine + H(+). In terms of biological role, specifically methylates the guanine in position 2445 (m2G2445) and the guanine in position 2069 (m7G2069) of 23S rRNA. The polypeptide is Ribosomal RNA large subunit methyltransferase K/L (Acinetobacter baumannii (strain ACICU)).